The primary structure comprises 665 residues: Chaperone protein dnaK1 (665 aa).

The residue at position 198 (Thr198) is a Phosphothreonine; by autocatalysis. Positions 634–665 are disordered; sequence DDPWDNQMNSNSRNSRYGNSRDDDPWDNDYFL. Positions 642–651 are enriched in low complexity; sequence NSNSRNSRYG.

Belongs to the heat shock protein 70 family.

Functionally, acts as a chaperone. This chain is Chaperone protein dnaK1 (dnaK1), found in Prochlorococcus marinus subsp. pastoris (strain CCMP1986 / NIES-2087 / MED4).